The primary structure comprises 155 residues: NADPH-dependent 7-cyano-7-deazaguanine reductase (155 aa).

The Thioimide intermediate role is filled by Cys53. Asp60 acts as the Proton donor in catalysis. Residues Val75–Ser77 and His94–Glu95 each bind substrate.

The protein belongs to the GTP cyclohydrolase I family. QueF type 1 subfamily.

The protein resides in the cytoplasm. It carries out the reaction 7-aminomethyl-7-carbaguanine + 2 NADP(+) = 7-cyano-7-deazaguanine + 2 NADPH + 3 H(+). It participates in tRNA modification; tRNA-queuosine biosynthesis. Its function is as follows. Catalyzes the NADPH-dependent reduction of 7-cyano-7-deazaguanine (preQ0) to 7-aminomethyl-7-deazaguanine (preQ1). The chain is NADPH-dependent 7-cyano-7-deazaguanine reductase from Hyphomonas neptunium (strain ATCC 15444).